The sequence spans 754 residues: Phosphoribosylformylglycinamidine synthase subunit PurL (754 aa).

His-54 is an active-site residue. Residues Tyr-57 and Lys-101 each coordinate ATP. Glu-103 contributes to the Mg(2+) binding site. Residues Ser-104–His-107 and Arg-126 contribute to the substrate site. The Proton acceptor role is filled by His-105. Asp-127 is a binding site for Mg(2+). A substrate-binding site is contributed by Gln-252. Mg(2+) is bound at residue Asp-280. Glu-324–Gln-326 serves as a coordination point for substrate. A disordered region spans residues Pro-386 to Pro-412. The ATP site is built by Asn-512 and Gly-549. Position 550 (Asn-550) interacts with Mg(2+). Ser-552 is a binding site for substrate.

This sequence belongs to the FGAMS family. As to quaternary structure, monomer. Part of the FGAM synthase complex composed of 1 PurL, 1 PurQ and 2 PurS subunits.

It is found in the cytoplasm. It carries out the reaction N(2)-formyl-N(1)-(5-phospho-beta-D-ribosyl)glycinamide + L-glutamine + ATP + H2O = 2-formamido-N(1)-(5-O-phospho-beta-D-ribosyl)acetamidine + L-glutamate + ADP + phosphate + H(+). It functions in the pathway purine metabolism; IMP biosynthesis via de novo pathway; 5-amino-1-(5-phospho-D-ribosyl)imidazole from N(2)-formyl-N(1)-(5-phospho-D-ribosyl)glycinamide: step 1/2. Functionally, part of the phosphoribosylformylglycinamidine synthase complex involved in the purines biosynthetic pathway. Catalyzes the ATP-dependent conversion of formylglycinamide ribonucleotide (FGAR) and glutamine to yield formylglycinamidine ribonucleotide (FGAM) and glutamate. The FGAM synthase complex is composed of three subunits. PurQ produces an ammonia molecule by converting glutamine to glutamate. PurL transfers the ammonia molecule to FGAR to form FGAM in an ATP-dependent manner. PurS interacts with PurQ and PurL and is thought to assist in the transfer of the ammonia molecule from PurQ to PurL. This Mycobacterium leprae (strain Br4923) protein is Phosphoribosylformylglycinamidine synthase subunit PurL.